The chain runs to 94 residues: Co-chaperonin GroES (94 aa).

Belongs to the GroES chaperonin family. Heptamer of 7 subunits arranged in a ring. Interacts with the chaperonin GroEL.

The protein localises to the cytoplasm. In terms of biological role, together with the chaperonin GroEL, plays an essential role in assisting protein folding. The GroEL-GroES system forms a nano-cage that allows encapsulation of the non-native substrate proteins and provides a physical environment optimized to promote and accelerate protein folding. GroES binds to the apical surface of the GroEL ring, thereby capping the opening of the GroEL channel. The sequence is that of Co-chaperonin GroES from Clostridium beijerinckii (strain ATCC 51743 / NCIMB 8052) (Clostridium acetobutylicum).